The chain runs to 559 residues: 2-succinyl-5-enolpyruvyl-6-hydroxy-3-cyclohexene-1-carboxylate synthase (559 aa).

The protein belongs to the TPP enzyme family. MenD subfamily. In terms of assembly, homodimer. It depends on Mg(2+) as a cofactor. Mn(2+) serves as cofactor. The cofactor is thiamine diphosphate.

It catalyses the reaction isochorismate + 2-oxoglutarate + H(+) = 5-enolpyruvoyl-6-hydroxy-2-succinyl-cyclohex-3-ene-1-carboxylate + CO2. Its pathway is quinol/quinone metabolism; 1,4-dihydroxy-2-naphthoate biosynthesis; 1,4-dihydroxy-2-naphthoate from chorismate: step 2/7. It functions in the pathway quinol/quinone metabolism; menaquinone biosynthesis. Functionally, catalyzes the thiamine diphosphate-dependent decarboxylation of 2-oxoglutarate and the subsequent addition of the resulting succinic semialdehyde-thiamine pyrophosphate anion to isochorismate to yield 2-succinyl-5-enolpyruvyl-6-hydroxy-3-cyclohexene-1-carboxylate (SEPHCHC). The protein is 2-succinyl-5-enolpyruvyl-6-hydroxy-3-cyclohexene-1-carboxylate synthase of Edwardsiella ictaluri (strain 93-146).